Here is a 340-residue protein sequence, read N- to C-terminus: Cobalt-precorrin-5B C(1)-methyltransferase (340 aa).

This sequence belongs to the CbiD family.

It catalyses the reaction Co-precorrin-5B + S-adenosyl-L-methionine = Co-precorrin-6A + S-adenosyl-L-homocysteine. It participates in cofactor biosynthesis; adenosylcobalamin biosynthesis; cob(II)yrinate a,c-diamide from sirohydrochlorin (anaerobic route): step 6/10. Its function is as follows. Catalyzes the methylation of C-1 in cobalt-precorrin-5B to form cobalt-precorrin-6A. This is Cobalt-precorrin-5B C(1)-methyltransferase from Methanococcoides burtonii (strain DSM 6242 / NBRC 107633 / OCM 468 / ACE-M).